A 167-amino-acid polypeptide reads, in one-letter code: Interferon gamma (167 aa).

The first 23 residues, 1–23 (MSYTSYILAFQLCLILGSYGCYC), serve as a signal peptide directing secretion. Pyrrolidone carboxylic acid is present on glutamine 24. N-linked (GlcNAc...) asparagine glycans are attached at residues asparagine 41, asparagine 108, and asparagine 117.

This sequence belongs to the type II (or gamma) interferon family. Homodimer. Interacts with IFNGR1 (via extracellular domain); this interaction promotes IFNGR1 dimerization. As to expression, released primarily from activated T lymphocytes.

The protein resides in the secreted. Functionally, type II interferon produced by immune cells such as T-cells and NK cells that plays crucial roles in antimicrobial, antiviral, and antitumor responses by activating effector immune cells and enhancing antigen presentation. Primarily signals through the JAK-STAT pathway after interaction with its receptor IFNGR1 to affect gene regulation. Upon IFNG binding, IFNGR1 intracellular domain opens out to allow association of downstream signaling components JAK2, JAK1 and STAT1, leading to STAT1 activation, nuclear translocation and transcription of IFNG-regulated genes. Many of the induced genes are transcription factors such as IRF1 that are able to further drive regulation of a next wave of transcription. Plays a role in class I antigen presentation pathway by inducing a replacement of catalytic proteasome subunits with immunoproteasome subunits. In turn, increases the quantity, quality, and repertoire of peptides for class I MHC loading. Increases the efficiency of peptide generation also by inducing the expression of activator PA28 that associates with the proteasome and alters its proteolytic cleavage preference. Up-regulates as well MHC II complexes on the cell surface by promoting expression of several key molecules such as cathepsins B/CTSB, H/CTSH, and L/CTSL. Participates in the regulation of hematopoietic stem cells during development and under homeostatic conditions by affecting their development, quiescence, and differentiation. The sequence is that of Interferon gamma (IFNG) from Oryctolagus cuniculus (Rabbit).